A 478-amino-acid chain; its full sequence is Membrane-bound lytic murein transglycosylase F (478 aa).

The signal sequence occupies residues 1-22 (MTRFLFAIILGFLLTACQQVTV). The interval 23-257 (EETEYVPHKL…HLNEKYFGHV (235 aa)) is non-LT domain. The segment at 258 to 478 (KRFDYIDTRA…PGTLSPDKPK (221 aa)) is LT domain. E302 is an active-site residue. The segment at 446–478 (SKQQNSDEEEPSDLASEDGPAPVPGTLSPDKPK) is disordered. Positions 451 to 461 (SDEEEPSDLAS) are enriched in acidic residues.

It in the N-terminal section; belongs to the bacterial solute-binding protein 3 family. This sequence in the C-terminal section; belongs to the transglycosylase Slt family.

The protein resides in the cell outer membrane. It carries out the reaction Exolytic cleavage of the (1-&gt;4)-beta-glycosidic linkage between N-acetylmuramic acid (MurNAc) and N-acetylglucosamine (GlcNAc) residues in peptidoglycan, from either the reducing or the non-reducing ends of the peptidoglycan chains, with concomitant formation of a 1,6-anhydrobond in the MurNAc residue.. Its function is as follows. Murein-degrading enzyme that degrades murein glycan strands and insoluble, high-molecular weight murein sacculi, with the concomitant formation of a 1,6-anhydromuramoyl product. Lytic transglycosylases (LTs) play an integral role in the metabolism of the peptidoglycan (PG) sacculus. Their lytic action creates space within the PG sacculus to allow for its expansion as well as for the insertion of various structures such as secretion systems and flagella. This chain is Membrane-bound lytic murein transglycosylase F, found in Shewanella sp. (strain ANA-3).